Here is a 553-residue protein sequence, read N- to C-terminus: Hydroxylamine reductase (553 aa).

[2Fe-2S] cluster is bound by residues cysteine 3, cysteine 6, cysteine 18, and cysteine 25. Hybrid [4Fe-2O-2S] cluster contacts are provided by histidine 252, glutamate 276, cysteine 320, cysteine 408, cysteine 436, cysteine 461, glutamate 495, and lysine 497. The residue at position 408 (cysteine 408) is a Cysteine persulfide.

This sequence belongs to the HCP family. [2Fe-2S] cluster is required as a cofactor. It depends on hybrid [4Fe-2O-2S] cluster as a cofactor.

It localises to the cytoplasm. The catalysed reaction is A + NH4(+) + H2O = hydroxylamine + AH2 + H(+). Catalyzes the reduction of hydroxylamine to form NH(3) and H(2)O. The sequence is that of Hydroxylamine reductase from Vibrio vulnificus (strain YJ016).